The chain runs to 107 residues: MSSEDGIKKLLDAERTAQKIVADARQDRVQKLKKAVEEAEKEIKEFREKKDKEYKEYESKYLGASSETASQLATNANKEIDTIRNETAANKQKVVDLLIKYAITCDN.

It belongs to the V-ATPase G subunit family. In terms of assembly, V-ATPase is a heteromultimeric enzyme composed of a peripheral catalytic V1 complex (components A to H) attached to an integral membrane V0 proton pore complex (components: a, c, c', c'' and d).

Its function is as follows. Catalytic subunit of the peripheral V1 complex of vacuolar ATPase (V-ATPase). V-ATPase is responsible for acidifying a variety of intracellular compartments in eukaryotic cells. This is V-type proton ATPase subunit G (atp6v1g) from Dictyostelium discoideum (Social amoeba).